The primary structure comprises 227 residues: Cytochrome c oxidase subunit 2 (227 aa).

Topologically, residues 1–14 (MAHAAQVGLQDATS) are mitochondrial intermembrane. Residues 15-45 (PIMEELVIFHDHALMIIFLICFLVLYALFLT) traverse the membrane as a helical segment. The Mitochondrial matrix portion of the chain corresponds to 46 to 59 (LTTKLTNTSISDAQ). The chain crosses the membrane as a helical span at residues 60–87 (EMETIWTILPAIILILIALPSLRILYLT). Over 88–227 (DEINDPSFTI…IFEMGPVFTL (140 aa)) the chain is Mitochondrial intermembrane. The Cu cation site is built by His161, Cys196, Glu198, Cys200, His204, and Met207. Glu198 contributes to the Mg(2+) binding site.

This sequence belongs to the cytochrome c oxidase subunit 2 family. In terms of assembly, component of the cytochrome c oxidase (complex IV, CIV), a multisubunit enzyme composed of 14 subunits. The complex is composed of a catalytic core of 3 subunits MT-CO1, MT-CO2 and MT-CO3, encoded in the mitochondrial DNA, and 11 supernumerary subunits COX4I, COX5A, COX5B, COX6A, COX6B, COX6C, COX7A, COX7B, COX7C, COX8 and NDUFA4, which are encoded in the nuclear genome. The complex exists as a monomer or a dimer and forms supercomplexes (SCs) in the inner mitochondrial membrane with NADH-ubiquinone oxidoreductase (complex I, CI) and ubiquinol-cytochrome c oxidoreductase (cytochrome b-c1 complex, complex III, CIII), resulting in different assemblies (supercomplex SCI(1)III(2)IV(1) and megacomplex MCI(2)III(2)IV(2)). Found in a complex with TMEM177, COA6, COX18, COX20, SCO1 and SCO2. Interacts with TMEM177 in a COX20-dependent manner. Interacts with COX20. Interacts with COX16. Cu cation serves as cofactor.

The protein resides in the mitochondrion inner membrane. It carries out the reaction 4 Fe(II)-[cytochrome c] + O2 + 8 H(+)(in) = 4 Fe(III)-[cytochrome c] + 2 H2O + 4 H(+)(out). In terms of biological role, component of the cytochrome c oxidase, the last enzyme in the mitochondrial electron transport chain which drives oxidative phosphorylation. The respiratory chain contains 3 multisubunit complexes succinate dehydrogenase (complex II, CII), ubiquinol-cytochrome c oxidoreductase (cytochrome b-c1 complex, complex III, CIII) and cytochrome c oxidase (complex IV, CIV), that cooperate to transfer electrons derived from NADH and succinate to molecular oxygen, creating an electrochemical gradient over the inner membrane that drives transmembrane transport and the ATP synthase. Cytochrome c oxidase is the component of the respiratory chain that catalyzes the reduction of oxygen to water. Electrons originating from reduced cytochrome c in the intermembrane space (IMS) are transferred via the dinuclear copper A center (CU(A)) of subunit 2 and heme A of subunit 1 to the active site in subunit 1, a binuclear center (BNC) formed by heme A3 and copper B (CU(B)). The BNC reduces molecular oxygen to 2 water molecules using 4 electrons from cytochrome c in the IMS and 4 protons from the mitochondrial matrix. The sequence is that of Cytochrome c oxidase subunit 2 (MT-CO2) from Pongo abelii (Sumatran orangutan).